The chain runs to 208 residues: Ras-related protein Rab-6 (208 aa).

GTP is bound by residues 14 to 21, T38, 62 to 66, and 120 to 123; these read DQSVGKTS, TAGQE, and KTDL. C208 is lipidated: S-geranylgeranyl cysteine.

Belongs to the small GTPase superfamily. Rab family.

In terms of biological role, protein transport. Probably involved in vesicular traffic. In Dictyostelium discoideum (Social amoeba), this protein is Ras-related protein Rab-6 (rab6).